Consider the following 441-residue polypeptide: Mannose-6-phosphate isomerase 2 (441 aa).

Zn(2+)-binding residues include Gln131, His133, Glu158, and His296. The active site involves Arg315.

Belongs to the mannose-6-phosphate isomerase type 1 family. Zn(2+) is required as a cofactor. As to expression, not expressed in any organs under light (at protein level).

The catalysed reaction is D-mannose 6-phosphate = D-fructose 6-phosphate. Its pathway is nucleotide-sugar biosynthesis; GDP-alpha-D-mannose biosynthesis; alpha-D-mannose 1-phosphate from D-fructose 6-phosphate: step 1/2. With respect to regulation, inhibited by EDTA, Zn(2+), Cd(2+), DTT, p-chloromercuribenzoate and L-ascorbic acid (AsA). Functionally, involved in the synthesis of the GDP-mannose and dolichol-phosphate-mannose required for a number of critical mannosyl transfer reactions. This is Mannose-6-phosphate isomerase 2 (PMI2) from Arabidopsis thaliana (Mouse-ear cress).